The chain runs to 942 residues: Protein inturned (942 aa).

A disordered region spans residues 1–52 (MASVASCDSRPSSDELPGDPSSQEEDEDYDFEDRVSDSGSYSSASSDYDDLE). Over residues 22–31 (SQEEDEDYDF) the composition is skewed to acidic residues. Positions 37–46 (DSGSYSSASS) are enriched in low complexity. Positions 185–263 (LVGIIHQTKW…PMQVKLTFEN (79 aa)) constitute a PDZ domain. Residues Ser670 and Ser674 each carry the phosphoserine modification. The interval 704–754 (TRKPSPSCSSGGSDNGCEGGEDDGFSPHTTPDAVRKQRESQGSDGLEESGT) is disordered.

Belongs to the inturned family. As to quaternary structure, component of the CPLANE (ciliogenesis and planar polarity effectors) complex, composed of INTU, FUZ and WDPCP. Interacts with CPLANE1. Interacts with NPHP4 and DAAM1; INTU is mediating the interaction between NPHP4 and DAAM1.

It localises to the cytoplasm. It is found in the cell surface. The protein resides in the cytoskeleton. The protein localises to the cilium basal body. Its subcellular location is the microtubule organizing center. It localises to the centrosome. It is found in the centriole. Plays a key role in ciliogenesis and embryonic development. Regulator of cilia formation by controlling the organization of the apical actin cytoskeleton and the positioning of the basal bodies at the apical cell surface, which in turn is essential for the normal orientation of elongating ciliary microtubules. Plays a key role in definition of cell polarity via its role in ciliogenesis but not via conversion extension. Has an indirect effect on hedgehog signaling. Proposed to function as core component of the CPLANE (ciliogenesis and planar polarity effectors) complex involved in the recruitment of peripheral IFT-A proteins to basal bodies. Required for recruitment of CPLANE2 to the mother centriole. Binds phosphatidylinositol 3-phosphate with highest affinity, followed by phosphatidylinositol 4-phosphate and phosphatidylinositol 5-phosphate. This Homo sapiens (Human) protein is Protein inturned (INTU).